The chain runs to 509 residues: Maturase K (509 aa).

The protein belongs to the intron maturase 2 family. MatK subfamily.

Its subcellular location is the plastid. The protein localises to the chloroplast. Its function is as follows. Usually encoded in the trnK tRNA gene intron. Probably assists in splicing its own and other chloroplast group II introns. The sequence is that of Maturase K from Dalea purpurea (Violet prairie clover).